A 35-amino-acid chain; its full sequence is Conotoxin TxMEKL-0422 (35 aa).

A disordered region spans residues 1 to 35; the sequence is NPASCCSCADVDPGRASRKTPKGEDQVFIKEKDRC. Positions 21–35 are enriched in basic and acidic residues; the sequence is PKGEDQVFIKEKDRC.

Contains disulfide bonds. As to expression, expressed by the venom duct.

It is found in the secreted. In Conus textile (Cloth-of-gold cone), this protein is Conotoxin TxMEKL-0422.